The primary structure comprises 120 residues: Large ribosomal subunit protein bL19 (120 aa).

The protein belongs to the bacterial ribosomal protein bL19 family.

This protein is located at the 30S-50S ribosomal subunit interface and may play a role in the structure and function of the aminoacyl-tRNA binding site. The chain is Large ribosomal subunit protein bL19 from Gloeothece citriformis (strain PCC 7424) (Cyanothece sp. (strain PCC 7424)).